We begin with the raw amino-acid sequence, 1101 residues long: Type II inositol polyphosphate 5-phosphatase 15 (1101 aa).

The segment covering 31 to 40 (RSAYSSSSSS) has biased composition (low complexity). Residues 31–54 (RSAYSSSSSSGDDESQPSVDDSNK) form a disordered region. WD repeat units follow at residues 121–162 (LRET…GSGR), 180–219 (FGSAAVVCMIGDEGSRVVWSGHRDGRIRCWRLRGDHGIEE), 225–263 (AHRGPVLSIAISAYGDIWSGSEGGALKVWPWDGALGKSL), 403–432 (DDSRKTEAIVISVDGMIWTGSSNGILMRWD), 433–481 (GNGN…GGWV), and 483–519 (HSGPVIKMAIGAGYLFTLANHGGIRGWNVTSPGPLDN). Catalytic regions lie at residues 749–765 (DMVIFLGDFNYRLDDIT) and 828–843 (KKRIPAWCDRILYRDN). Lysine 907 participates in a covalent cross-link: Glycyl lysine isopeptide (Lys-Gly) (interchain with G-Cter in ubiquitin).

The protein belongs to the inositol polyphosphate 5-phosphatase family. Requires Mg(2+) as cofactor. In terms of tissue distribution, predominantly expressed in interfascicular fibers and vascular bundles. Expressed in seedlings, stems, roots and flowers. Expressed at lower level in mature leaves.

It carries out the reaction a 1,2-diacyl-sn-glycero-3-phospho-(1D-myo-inositol-4,5-bisphosphate) + H2O = a 1,2-diacyl-sn-glycero-3-phospho-(1D-myo-inositol 4-phosphate) + phosphate. It catalyses the reaction a 1,2-diacyl-sn-glycero-3-phospho-(1D-myo-inositol-3,4,5-trisphosphate) + H2O = a 1,2-diacyl-sn-glycero-3-phospho-(1D-myo-inositol-3,4-bisphosphate) + phosphate. The catalysed reaction is 1D-myo-inositol 1,4,5-trisphosphate + H2O = 1D-myo-inositol 1,4-bisphosphate + phosphate. Its function is as follows. Has phosphatase activity toward PtdIns(4,5)P2, PtdIns(3,4,5)P3 and Ins(1,4,5)P3. Has a higher substrate affinity toward PtdIns(4,5)P2. Required for secondary wall synthesis and actin organization in fiber cells. The polypeptide is Type II inositol polyphosphate 5-phosphatase 15 (Arabidopsis thaliana (Mouse-ear cress)).